The following is a 172-amino-acid chain: Translocon-associated protein subunit delta (172 aa).

The first 23 residues, 1 to 23 (MAAMASFGALALLLLSGLSCCSE), serve as a signal peptide directing secretion. Over 24 to 143 (ACLEPQITPS…SVDHRGTWNG (120 aa)) the chain is Lumenal. The cysteines at positions 25 and 56 are disulfide-linked. Residue Lys72 forms a Glycyl lysine isopeptide (Lys-Gly) (interchain with G-Cter in ubiquitin) linkage. A helical membrane pass occupies residues 144 to 164 (PWVSTEVLAAVIGIVIYYLAF). Residues 165 to 172 (SAKSHIQA) lie on the Cytoplasmic side of the membrane.

This sequence belongs to the TRAP-delta family. Heterotetramer of TRAP-alpha, TRAP-beta, TRAP-delta and TRAP-gamma.

The protein localises to the endoplasmic reticulum membrane. TRAP proteins are part of a complex whose function is to bind calcium to the ER membrane and thereby regulate the retention of ER resident proteins. This Mus musculus (Mouse) protein is Translocon-associated protein subunit delta (Ssr4).